The primary structure comprises 123 residues: Protein Wnt-7a (123 aa).

Residue Ser-1 is the site of O-palmitoleoyl serine; by PORCN attachment. The interval 33–61 (VEPVRASRNKRPTFLKIKKPLSYLKPMDT) is disordered linker. An intrachain disulfide couples Cys-89 to Cys-104. Asn-90 carries an N-linked (GlcNAc...) asparagine glycan.

The protein belongs to the Wnt family. In terms of processing, palmitoleoylation is required for efficient binding to frizzled receptors. Depalmitoleoylation leads to Wnt signaling pathway inhibition.

The protein resides in the secreted. Its subcellular location is the extracellular space. The protein localises to the extracellular matrix. Functionally, ligand for members of the frizzled family of seven transmembrane receptors that functions in the canonical Wnt/beta-catenin signaling pathway. Plays an important role in embryonic development, including dorsal versus ventral patterning during limb development, skeleton development and urogenital tract development. Required for central nervous system (CNS) angiogenesis and blood-brain barrier regulation. The sequence is that of Protein Wnt-7a (WNT-7A) from Plethodon jordani (Red-cheeked salamander).